Consider the following 684-residue polypeptide: Early phosphoprotein p84 (684 aa).

Disordered stretches follow at residues 166-301 (LGGS…MSLP), 317-336 (SSAV…HHNA), 357-393 (VVSS…AAAT), 407-452 (RAPA…SPRF), and 569-657 (SNSS…GPSF). A compositionally biased stretch (basic and acidic residues) spans 180–191 (EQQRRRQEQRHE). Positions 201-220 (AGGGGGGGASGGGGGGGSGG) are enriched in gly residues. Composition is skewed to basic and acidic residues over residues 232–245 (RDPR…ERRP) and 258–272 (REAK…HEGH). The Nuclear localization signal motif lies at 261-264 (KRQK). Residues 285 to 296 (GGAGGGGGGGSG) are compositionally biased toward gly residues. Over residues 326–335 (NHHHHHHHHN) the composition is skewed to basic residues. Residues 359–377 (SSPSSTSPSSLLSLPRPSS) are compositionally biased toward low complexity. Polar residues predominate over residues 425 to 442 (STTPVSNCRVPPNSQESA). Residues 578–587 (PLPPPPPPPG) show a composition bias toward pro residues. Positions 598 to 608 (RGGGGGGGGGR) are enriched in gly residues. A compositionally biased stretch (low complexity) spans 612–622 (RQAASSSSSSS).

The protein belongs to the herpesviridae U79/UL112 family. As to quaternary structure, isoforms 1, 2, 3 and 4 interacts with themselves and with each other via their shared N-terminal regions; these interactions are important to both their intranuclear targeting and the recruitment of UL44 to subnuclear sites for viral replication.

It localises to the host nucleus. The protein localises to the virion. Functionally, needed for efficient replication. Recruits the DNA polymerase processivity factor to pre-replication foci. This Homo sapiens (Human) protein is Early phosphoprotein p84 (UL112/UL113).